The chain runs to 349 residues: Cytokine response-modifying protein B (349 aa).

The N-terminal stretch at 1–22 (MKSVLYLYILFLSCIIINGRDA) is a signal peptide. Residues 1-160 (MKSVLYLYIL…SPCGFGTYSH (160 aa)) form a TNF-binding region. TNFR-Cys repeat units follow at residues 31-66 (KCKDTEYKRHNLCCLSCPPGTYASRLCDSKTNTQCT) and 67-108 (PCGS…NRIC). 6 disulfide bridges follow: C32/C43, C44/C57, C47/C65, C68/C83, C86/C100, and C90/C108. N101, N173, N189, N215, and N248 each carry an N-linked (GlcNAc...) asparagine; by host glycan. Residues 161–349 (TVSSADKCEP…ITNSKPTRFL (189 aa)) are chemokine-binding.

Belongs to the orthopoxvirus OPG002 family. In terms of assembly, homodimer. Interacts with host TNF, LTA, CCL28, CCL25, CXCL12, CXCL13 and CXCl14.

The protein localises to the secreted. Functionally, inhibits host immune defense by binding to host TNF and various chemokines in the extracellular space. Binds host CC chemokines (beta chemokines) and CXC chemokines (alpha chemokines). This Variola virus (isolate Human/India/Ind3/1967) (VARV) protein is Cytokine response-modifying protein B (OPG002).